Reading from the N-terminus, the 676-residue chain is Methionine--tRNA ligase (676 aa).

Positions proline 11–histidine 21 match the 'HIGH' region motif. Residues cysteine 143, cysteine 146, cysteine 156, and cysteine 159 each coordinate Zn(2+). Residues lysine 326–serine 330 carry the 'KMSKS' region motif. Threonine 329 provides a ligand contact to ATP. The tRNA-binding domain occupies glutamate 581–lysine 676.

Belongs to the class-I aminoacyl-tRNA synthetase family. MetG type 1 subfamily. In terms of assembly, homodimer. Zn(2+) serves as cofactor.

Its subcellular location is the cytoplasm. The catalysed reaction is tRNA(Met) + L-methionine + ATP = L-methionyl-tRNA(Met) + AMP + diphosphate. In terms of biological role, is required not only for elongation of protein synthesis but also for the initiation of all mRNA translation through initiator tRNA(fMet) aminoacylation. The protein is Methionine--tRNA ligase of Methanosphaera stadtmanae (strain ATCC 43021 / DSM 3091 / JCM 11832 / MCB-3).